Reading from the N-terminus, the 488-residue chain is Glutamyl-tRNA(Gln) amidotransferase subunit A (488 aa).

Catalysis depends on charge relay system residues lysine 77 and serine 152. The active-site Acyl-ester intermediate is the serine 176.

Belongs to the amidase family. GatA subfamily. In terms of assembly, heterotrimer of A, B and C subunits.

The catalysed reaction is L-glutamyl-tRNA(Gln) + L-glutamine + ATP + H2O = L-glutaminyl-tRNA(Gln) + L-glutamate + ADP + phosphate + H(+). Functionally, allows the formation of correctly charged Gln-tRNA(Gln) through the transamidation of misacylated Glu-tRNA(Gln) in organisms which lack glutaminyl-tRNA synthetase. The reaction takes place in the presence of glutamine and ATP through an activated gamma-phospho-Glu-tRNA(Gln). In Streptococcus pneumoniae (strain JJA), this protein is Glutamyl-tRNA(Gln) amidotransferase subunit A.